A 331-amino-acid polypeptide reads, in one-letter code: Lipoyl synthase (331 aa).

Residues Cys57, Cys62, Cys68, Cys83, Cys87, Cys90, and Ser294 each contribute to the [4Fe-4S] cluster site. A Radical SAM core domain is found at 69–283 (WEDREATFLI…KAEAEAIGFL (215 aa)).

This sequence belongs to the radical SAM superfamily. Lipoyl synthase family. The cofactor is [4Fe-4S] cluster.

The protein localises to the cytoplasm. It carries out the reaction [[Fe-S] cluster scaffold protein carrying a second [4Fe-4S](2+) cluster] + N(6)-octanoyl-L-lysyl-[protein] + 2 oxidized [2Fe-2S]-[ferredoxin] + 2 S-adenosyl-L-methionine + 4 H(+) = [[Fe-S] cluster scaffold protein] + N(6)-[(R)-dihydrolipoyl]-L-lysyl-[protein] + 4 Fe(3+) + 2 hydrogen sulfide + 2 5'-deoxyadenosine + 2 L-methionine + 2 reduced [2Fe-2S]-[ferredoxin]. It functions in the pathway protein modification; protein lipoylation via endogenous pathway; protein N(6)-(lipoyl)lysine from octanoyl-[acyl-carrier-protein]: step 2/2. Catalyzes the radical-mediated insertion of two sulfur atoms into the C-6 and C-8 positions of the octanoyl moiety bound to the lipoyl domains of lipoate-dependent enzymes, thereby converting the octanoylated domains into lipoylated derivatives. The sequence is that of Lipoyl synthase from Clavibacter michiganensis subsp. michiganensis (strain NCPPB 382).